The chain runs to 290 residues: Acetylglutamate kinase (290 aa).

Substrate is bound by residues 65–66, arginine 87, and asparagine 186; that span reads GG.

It belongs to the acetylglutamate kinase family. ArgB subfamily.

It localises to the cytoplasm. The enzyme catalyses N-acetyl-L-glutamate + ATP = N-acetyl-L-glutamyl 5-phosphate + ADP. It participates in amino-acid biosynthesis; L-arginine biosynthesis; N(2)-acetyl-L-ornithine from L-glutamate: step 2/4. Functionally, catalyzes the ATP-dependent phosphorylation of N-acetyl-L-glutamate. This is Acetylglutamate kinase from Mycobacterium sp. (strain KMS).